The following is a 106-amino-acid chain: Small ribosomal subunit protein uS10 (106 aa).

This sequence belongs to the universal ribosomal protein uS10 family. In terms of assembly, part of the 30S ribosomal subunit.

Its function is as follows. Involved in the binding of tRNA to the ribosomes. The protein is Small ribosomal subunit protein uS10 of Synechococcus sp. (strain CC9311).